The chain runs to 338 residues: GTPase Obg (338 aa).

Positions 1–159 (MQFIDQAEIE…RRIRLELKLL (159 aa)) constitute an Obg domain. Positions 160-328 (AEVGIIGLPN…MLQATWEQLD (169 aa)) constitute an OBG-type G domain. GTP contacts are provided by residues 166–173 (GLPNAGKS), 191–195 (FTTLI), 213–216 (DIPG), 280–283 (NKLD), and 309–311 (SAV). Mg(2+) is bound by residues serine 173 and threonine 193.

Belongs to the TRAFAC class OBG-HflX-like GTPase superfamily. OBG GTPase family. As to quaternary structure, monomer. Mg(2+) is required as a cofactor.

The protein localises to the cytoplasm. In terms of biological role, an essential GTPase which binds GTP, GDP and possibly (p)ppGpp with moderate affinity, with high nucleotide exchange rates and a fairly low GTP hydrolysis rate. Plays a role in control of the cell cycle, stress response, ribosome biogenesis and in those bacteria that undergo differentiation, in morphogenesis control. This is GTPase Obg from Gloeothece citriformis (strain PCC 7424) (Cyanothece sp. (strain PCC 7424)).